The chain runs to 2058 residues: E3 ubiquitin-protein ligase ubr-1 (2058 aa).

A UBR-type zinc finger spans residues 93-164 (QICGHVFKNG…EGYACANHEK (72 aa)). The tract at residues 1107 to 1175 (VPEAAPAPEN…TPSEKSETVV (69 aa)) is disordered. Low complexity predominate over residues 1108 to 1119 (PEAAPAPENKPA). Basic and acidic residues-rich tracts occupy residues 1123-1138 (EEIK…EMRQ) and 1153-1175 (KKIE…ETVV). The segment at 1217 to 1335 (LTCILCQEDE…GEYQCPLCKR (119 aa)) adopts an RING-type; atypical zinc-finger fold. Disordered stretches follow at residues 1381–1416 (LSSE…DTAN) and 1475–1499 (PAAT…ESGK). Positions 1388-1397 (KKGHSRKRSH) are enriched in basic residues. The span at 1398–1413 (SERSLLDLEKLSKDPD) shows a compositional bias: basic and acidic residues. The segment covering 1486 to 1495 (GSSSRIPESQ) has biased composition (polar residues). The helical transmembrane segment at 1695 to 1715 (ILQIDILSLAISLMMTIGWTW) threads the bilayer.

It belongs to the E3 ubiquitin-protein ligase UBR1-like family. As to quaternary structure, interacts with ubc-1. Component of a complex containing at least ced-3, ubr-1 and possibly ate-1. Within complex interacts with ced-3 (via the p17 subunit); this interaction is required for the ced-3-mediated cleavage and subsequent degradation of the heterochronic protein lin-28. Expressed in pharyngeal muscles, body wall muscles and a subset of neurons throughout postembryonic development. Prominently expressed in premotor interneurons, but not expressed in ventral cord motor neurons. Weakly expressed in hypodermal seam cells.

It is found in the membrane. The enzyme catalyses S-ubiquitinyl-[E2 ubiquitin-conjugating enzyme]-L-cysteine + [acceptor protein]-L-lysine = [E2 ubiquitin-conjugating enzyme]-L-cysteine + N(6)-ubiquitinyl-[acceptor protein]-L-lysine.. Its pathway is protein modification; protein ubiquitination. Its function is as follows. E3 ubiquitin-protein ligase which is a component of the N-end rule pathway. Recognizes and binds to proteins bearing specific N-terminal residues that are destabilizing according to the N-end rule, leading to their ubiquitination and subsequent degradation. In complex with ced-3, required for the ced-3-mediated cleavage and subsequent degradation of the heterochronic protein lin-28 to regulate seam cell fate patterning during larval development. Negatively regulates glutamate metabolism through the aspartate aminotransferase got-1.2. Modulation of glutamate levels most likely controls locomotory behavior, in particular backwards locomotion or 'reversals'. The protein is E3 ubiquitin-protein ligase ubr-1 of Caenorhabditis elegans.